The sequence spans 770 residues: Cyclopiane-type diterpene synthase (770 aa).

The segment at 5-335 (ITDEYAVGID…VPRYCKVDRN (331 aa)) is terpene cyclase. 2 residues coordinate Mg(2+): Asp-97 and Asp-101. Substrate contacts are provided by residues Asp-97, Asp-101, 190–193 (RIVD), Asn-234, 238–242 (SWDKE), and 328–329 (RY). The DDXXD 1 signature appears at 97-101 (DDETD). The NSE/DTE signature appears at 234-242 (NDLFSWDKE). The tract at residues 336-720 (PYKDHLEKYG…WALRLLIMKL (385 aa)) is prenyltransferase. The tract at residues 371-397 (NQLKEPSSSTYKTHFSPLEPNPGPEQT) is disordered. The span at 374–383 (KEPSSSTYKT) shows a compositional bias: polar residues. Lys-423, Arg-426, and His-455 together coordinate isopentenyl diphosphate. Mg(2+)-binding residues include Asp-462 and Asp-466. The DDXXD 2 signature appears at 462-466 (DDIQD). Arg-471 lines the dimethylallyl diphosphate pocket. Arg-472 lines the isopentenyl diphosphate pocket. Lys-548, Thr-549, Gln-584, Asn-591, Lys-620, and Lys-630 together coordinate dimethylallyl diphosphate.

In the N-terminal section; belongs to the terpene synthase family. It in the C-terminal section; belongs to the FPP/GGPP synthase family. As to quaternary structure, hexamer. Mg(2+) serves as cofactor.

The enzyme catalyses isopentenyl diphosphate + (2E,6E)-farnesyl diphosphate = (2E,6E,10E)-geranylgeranyl diphosphate + diphosphate. It carries out the reaction (2E,6E,10E)-geranylgeranyl diphosphate + H2O = (+)-penichrysol + diphosphate. Its pathway is secondary metabolite biosynthesis; terpenoid biosynthesis. Bifunctional terpene synthase converts dimethylallyl diphosphate (DMAPP) and isopentenyl diphosphate (IPP) into a cyclopiane-type diterpene. The C-terminal prenyltransferase (PT) domain of PcCS catalyzes formation of geranylgeranyl pyrophosphate (GGPP), whereas the N-terminal terpene cyclase (TC) domain catalyzes the cyclization of GGPP to the cyclopiane-type diterpene penichrysol. The protein is Cyclopiane-type diterpene synthase of Penicillium chrysogenum (Penicillium notatum).